We begin with the raw amino-acid sequence, 994 residues long: Chloride channel protein 1 (994 aa).

At 1-118 (MERSQSQQHG…VLRRKLGEDW (118 aa)) the chain is on the cytoplasmic side. The segment at 37–61 (SENGGLQHRPRKDLGPRHNAHPTQI) is disordered. A helical transmembrane segment spans residues 119 to 150 (IFLVLLGLLMALVSWCMDYVSAKSLQAYKWTY). At 151-158 (AQMQPSLP) the chain is on the extracellular side. The helical transmembrane segment at 159-179 (LQYLAWVTFPLILILFSALFC) threads the bilayer. Topologically, residues 180-183 (QLIS) are cytoplasmic. Residues 184–189 (PQAVGS) constitute an intramembrane region (note=Loop between two helices). A Selectivity filter part_1 motif is present at residues 188–192 (GSGIP). A chloride-binding site is contributed by Ser-189. An intramembrane region (helical) is located at residues 190 to 195 (GIPEMK). The Cytoplasmic portion of the chain corresponds to 196 to 208 (TILRGVVLKEYLT). Positions 209–224 (LKAFVAKVVALTAGLG) form an intramembrane region, helical. Residues 225 to 230 (SGIPVG) constitute an intramembrane region (note=Loop between two helices). The Selectivity filter part_2 signature appears at 230-234 (GKEGP). Positions 231-246 (KEGPFVHIASICAAVL) form an intramembrane region, helical. Over 247-268 (SKFMSMFSGVYEQPYYYTDILT) the chain is Cytoplasmic. Intramembrane regions (helical) lie at residues 269–280 (VGCAVGVGCCFG) and 281–290 (TPLGGVLFSI). Topologically, residues 291–301 (EVTSTYFAVRN) are cytoplasmic. A helical membrane pass occupies residues 302–321 (YWRGFFAATFSAFVFRVLAV). Topologically, residues 322–347 (WNKDAVTITALFRTNFRMDFPFDLKE) are extracellular. The helical transmembrane segment at 348–376 (LPAFAVIGICCGFLGAVFVYLHRQVMLGV) threads the bilayer. The Cytoplasmic portion of the chain corresponds to 377–390 (RKHKALSQFLAKHR). A helical transmembrane segment spans residues 391-408 (LLYPGIVTFVIASLTFPP). At 409-414 (GMGQFM) the chain is on the extracellular side. Positions 415–418 (AGEL) form an intramembrane region, note=Loop between two helices. Residues 419–426 (MPREAIST) constitute an intramembrane region (helical). Residues 427-457 (LFDNNTWVKHIGDPKSLGQSAVWIHPQVNVV) are Extracellular-facing. Positions 458 to 475 (IIILLFFVMKFWMSIVAT) form an intramembrane region, helical. Positions 476 to 482 (TMPIPCG) form an intramembrane region, note=Loop between two helices. The short motif at 482 to 486 (GGFMP) is the Selectivity filter part_3 element. The segment at residues 483 to 498 (GFMPVFVLGAAFGRLV) is an intramembrane region (helical). Residue Phe-484 coordinates chloride. The Extracellular segment spans residues 499–521 (GEIMAMLFPEGILFDDIIYKILP). Residues 522 to 538 (GGYAVIGAAALTGAVSH) constitute an intramembrane region (helical). Residues 539–540 (TV) constitute an intramembrane region (note=Loop between two helices). Residues 541-554 (STAVICFELTGQIA) constitute an intramembrane region (helical). Over 555–557 (HIL) the chain is Extracellular. The segment at residues 558–571 (PMMVAVILANMVAQ) is an intramembrane region (helical). Positions 572–575 (SLQP) form an intramembrane region, note=Loop between two helices. The segment at residues 576–578 (SLY) is an intramembrane region (helical). Tyr-578 is a chloride binding site. The Cytoplasmic segment spans residues 579 to 994 (DSIIQVKKLP…DEEDEDELIL (416 aa)). The CBS 1 domain maps to 609 to 668 (MVRDVKFVSASCTYGELRNLLQTTTVKTLPLVDSKDSMILLGSVERSELQSLLQRHLCAE). Disordered stretches follow at residues 710 to 769 (EDED…SADQ), 880 to 923 (TKSG…DGAP), and 965 to 994 (NLGP…ELIL). The segment covering 725–741 (TPTPPPPPPPPLPPQFP) has biased composition (pro residues). The region spanning 827–882 (IDQSPFQLVEQTTLHKTHTLFSLLGLHLAYVTSMGKLRGVLALEELQKAIKGHTKS) is the CBS 2 domain. Ser-892 bears the Phosphoserine mark. Acidic residues predominate over residues 985-994 (DEEDEDELIL).

The protein belongs to the chloride channel (TC 2.A.49) family. ClC-1/CLCN1 subfamily. In terms of assembly, homodimer. In terms of tissue distribution, predominantly expressed in skeletal muscles.

It localises to the cell membrane. The protein resides in the sarcolemma. The protein localises to the T-tubule. It catalyses the reaction chloride(in) = chloride(out). It carries out the reaction bromide(in) = bromide(out). The catalysed reaction is iodide(out) = iodide(in). The enzyme catalyses thiocyanate(in) = thiocyanate(out). It catalyses the reaction nitrate(in) = nitrate(out). Modulated by membrane voltage with depolarization favouring channel opening and hyperpolarization favouring channel closure. Inhibited by acidic pH and ATP binding due to a shift of voltage dependence of common gating to more positive voltages. Inhibited by 9-anthracene-carboxylic acid. Functionally, voltage-gated chloride channel involved in skeletal muscle excitability. Generates most of the plasma membrane chloride conductance in skeletal muscle fibers, stabilizes the resting membrane potential and contributes to the repolarization phase during action potential firing. Forms a homodimeric channel where each subunit has its own ion conduction pathway. Conducts double-barreled currents controlled by two types of gates, two fast glutamate gates that control each subunit independently and a slow common gate that opens and shuts off both subunits simultaneously. Has a significant open probability at muscle resting potential and is further activated upon membrane depolarization. Permeable to small monovalent anions with ion selectivity for chloride &gt; thiocyanate &gt; bromide &gt; nitrate &gt; iodide. The chain is Chloride channel protein 1 (Clcn1) from Rattus norvegicus (Rat).